The chain runs to 305 residues: tRNA pseudouridine synthase B (305 aa).

Residue Asp-39 is the Nucleophile of the active site.

Belongs to the pseudouridine synthase TruB family. Type 1 subfamily.

The enzyme catalyses uridine(55) in tRNA = pseudouridine(55) in tRNA. Its function is as follows. Responsible for synthesis of pseudouridine from uracil-55 in the psi GC loop of transfer RNAs. The protein is tRNA pseudouridine synthase B of Staphylococcus aureus (strain Newman).